We begin with the raw amino-acid sequence, 242 residues long: NLP effector protein 8 (242 aa).

The first 17 residues, 1–17 (MHLTVFYLVALCTFASA), serve as a signal peptide directing secretion. The short motif at 108-118 (AIMYAWYFPRD) is the Conserved undecapeptide motif element. A Conserved heptapeptide motif motif is present at residues 127 to 133 (GHRNAWE). Asn206 is a glycosylation site (N-linked (GlcNAc...) asparagine).

The protein belongs to the Necrosis inducing protein (NPP1) family.

It localises to the secreted. Probable secreted effector that may act as a pathogen-associated molecular pattern (PAMP) recognized by the plant immune system. The sequence is that of NLP effector protein 8 from Plasmopara viticola (Downy mildew of grapevine).